We begin with the raw amino-acid sequence, 404 residues long: Cysteine desulfurase IscS (404 aa).

Pyridoxal 5'-phosphate is bound by residues 75 to 76 (AT), asparagine 155, glutamine 183, and 203 to 205 (SGH). Lysine 206 is subject to N6-(pyridoxal phosphate)lysine. Threonine 243 contacts pyridoxal 5'-phosphate. The Cysteine persulfide intermediate role is filled by cysteine 328. Cysteine 328 provides a ligand contact to [2Fe-2S] cluster.

Belongs to the class-V pyridoxal-phosphate-dependent aminotransferase family. NifS/IscS subfamily. Homodimer. Forms a heterotetramer with IscU, interacts with other sulfur acceptors. Requires pyridoxal 5'-phosphate as cofactor.

Its subcellular location is the cytoplasm. It catalyses the reaction (sulfur carrier)-H + L-cysteine = (sulfur carrier)-SH + L-alanine. It participates in cofactor biosynthesis; iron-sulfur cluster biosynthesis. In terms of biological role, master enzyme that delivers sulfur to a number of partners involved in Fe-S cluster assembly, tRNA modification or cofactor biosynthesis. Catalyzes the removal of elemental sulfur atoms from cysteine to produce alanine. Functions as a sulfur delivery protein for Fe-S cluster synthesis onto IscU, an Fe-S scaffold assembly protein, as well as other S acceptor proteins. This Shewanella halifaxensis (strain HAW-EB4) protein is Cysteine desulfurase IscS.